The sequence spans 448 residues: Ribosomal protein uS12 methylthiotransferase RimO (448 aa).

Positions Gln7–Ser119 constitute an MTTase N-terminal domain. 6 residues coordinate [4Fe-4S] cluster: Cys16, Cys50, Cys82, Cys151, Cys155, and Cys158. Residues Ile137–Ala366 form the Radical SAM core domain.

This sequence belongs to the methylthiotransferase family. RimO subfamily. The cofactor is [4Fe-4S] cluster.

It is found in the cytoplasm. It carries out the reaction L-aspartate(89)-[ribosomal protein uS12]-hydrogen + (sulfur carrier)-SH + AH2 + 2 S-adenosyl-L-methionine = 3-methylsulfanyl-L-aspartate(89)-[ribosomal protein uS12]-hydrogen + (sulfur carrier)-H + 5'-deoxyadenosine + L-methionine + A + S-adenosyl-L-homocysteine + 2 H(+). Catalyzes the methylthiolation of an aspartic acid residue of ribosomal protein uS12. The sequence is that of Ribosomal protein uS12 methylthiotransferase RimO from Helicobacter hepaticus (strain ATCC 51449 / 3B1).